The primary structure comprises 485 residues: MNEENIDGTNGCSKVRTGTQNEAALLALMEKTGYNMVQENGQRKFGGPPPGWEGPPPPRGCEVFVGKIPRDMYEDELVPVFERAGKIYEFRLMMEFSGENRGYAFVMYTTKEEAQLAIRILNNYEIRPGKFIGVCVSLDNCRLFIGAIPKEKKKEEILDEMKKVTEGVVDVIVYPSATDKTKNRGFAFVEYESHRAAAMARRKLIPGTFQLWGHTIQVDWADPEKEVDEETMQRVKVLYVRNLMISTTEETIKAEFNKFKPGAVERVKKLRDYAFVHFFNREDAVAAMSVMNGKCIDGASIEVTLAKPVNKENTWRQHLNGQISPNSENLIVFANKEESHPKTLGKLPTLPARLNGQHSPSPPEVERCTYPFYPGTKLTPISMYSLKSNHFNSAVMHLDYYCNKNNWAPPEYYLYSTTSQDGKVLLVYKIVIPAIANGSQSYFMPDKLCTTLEDAKELAAQFTLLHLDRERNLFSLDLCRRIWRK.

RRM domains are found at residues 61–139 (CEVF…VSLD), 141–223 (CRLF…WADP), and 236–308 (KVLY…LAKP).

As to quaternary structure, interacts with YTHDC2, MEIOC, MOV10, CNOT6L, DDX4, UPF1 and PABPC1.

Its subcellular location is the cytoplasm. Essential for male and female fertility, playing a crucial role in regulating germ cell development by ensuring the proper progression of meiosis prophase I. Regulates mitotic-to-meiotic transition in spermatogenesis by forming a complex with MEIOC and YTHDC2 which recognizes and down-regulates mitotic transcripts for a successful meiotic entry. Required for normal synaptonemal complex formation during meiosis, binding meiotic cohesin subunit mRNAs containing GCCUAU/GUUCGA motifs in their 3'UTRs regions and positively regulating their translation. Required for spermatogonial differentiation in both developing and adult testis. The polypeptide is Probable RNA-binding protein 46 (RBM46) (Macaca fascicularis (Crab-eating macaque)).